We begin with the raw amino-acid sequence, 207 residues long: Ribosomal RNA large subunit methyltransferase E (207 aa).

S-adenosyl-L-methionine is bound by residues G60, W62, D80, D96, and D121. K161 serves as the catalytic Proton acceptor.

This sequence belongs to the class I-like SAM-binding methyltransferase superfamily. RNA methyltransferase RlmE family.

The protein localises to the cytoplasm. The catalysed reaction is uridine(2552) in 23S rRNA + S-adenosyl-L-methionine = 2'-O-methyluridine(2552) in 23S rRNA + S-adenosyl-L-homocysteine + H(+). Its function is as follows. Specifically methylates the uridine in position 2552 of 23S rRNA at the 2'-O position of the ribose in the fully assembled 50S ribosomal subunit. The protein is Ribosomal RNA large subunit methyltransferase E of Marinobacter nauticus (strain ATCC 700491 / DSM 11845 / VT8) (Marinobacter aquaeolei).